Here is a 350-residue protein sequence, read N- to C-terminus: Uroporphyrinogen decarboxylase (350 aa).

Substrate-binding positions include 28–32 (RQAGR), D78, Y155, S210, and H325.

This sequence belongs to the uroporphyrinogen decarboxylase family. As to quaternary structure, homodimer.

The protein localises to the cytoplasm. The catalysed reaction is uroporphyrinogen III + 4 H(+) = coproporphyrinogen III + 4 CO2. Its pathway is porphyrin-containing compound metabolism; protoporphyrin-IX biosynthesis; coproporphyrinogen-III from 5-aminolevulinate: step 4/4. Functionally, catalyzes the decarboxylation of four acetate groups of uroporphyrinogen-III to yield coproporphyrinogen-III. The protein is Uroporphyrinogen decarboxylase of Microcystis aeruginosa (strain NIES-843 / IAM M-2473).